We begin with the raw amino-acid sequence, 190 residues long: Protein FAM210B, mitochondrial (190 aa).

Residues 1 to 58 (MAGLLTLLGPAGRVSTRLRPLAPWLLGTATSCAPPLWALALSHPVPDARLLRTARGDC) constitute a mitochondrion transit peptide. Residues 56-66 (GDCLSRQEPNR) show a composition bias toward basic and acidic residues. The interval 56–81 (GDCLSRQEPNRTPEPGGSVTGTEKKL) is disordered. Positions 78–189 (EKKLSRTQQL…VGLFKPPATK (112 aa)) constitute a DUF1279 domain. A run of 2 helical transmembrane segments spans residues 97-117 (VGVS…YTVV) and 148-168 (FVVA…ITLV).

This sequence belongs to the FAM210 family. As to expression, expressed in late erythroblast differentiation stages.

The protein resides in the mitochondrion. It localises to the mitochondrion outer membrane. In terms of biological role, plays a role in erythroid differentiation. Involved in cell proliferation and tumor cell growth suppression. Involved in the metabolic reprogramming of cancer cells in a PDK4-dependent manner. This is Protein FAM210B, mitochondrial from Mus musculus (Mouse).